Consider the following 240-residue polypeptide: Ubiquinone biosynthesis O-methyltransferase (240 aa).

Arg44, Gly64, Asp85, and Met129 together coordinate S-adenosyl-L-methionine.

This sequence belongs to the methyltransferase superfamily. UbiG/COQ3 family.

It carries out the reaction a 3-demethylubiquinol + S-adenosyl-L-methionine = a ubiquinol + S-adenosyl-L-homocysteine + H(+). The catalysed reaction is a 3-(all-trans-polyprenyl)benzene-1,2-diol + S-adenosyl-L-methionine = a 2-methoxy-6-(all-trans-polyprenyl)phenol + S-adenosyl-L-homocysteine + H(+). The protein operates within cofactor biosynthesis; ubiquinone biosynthesis. O-methyltransferase that catalyzes the 2 O-methylation steps in the ubiquinone biosynthetic pathway. The sequence is that of Ubiquinone biosynthesis O-methyltransferase from Shigella flexneri serotype 5b (strain 8401).